Reading from the N-terminus, the 406-residue chain is Inactive serine protease 35 (406 aa).

An N-terminal signal peptide occupies residues 1–17; that stretch reads MLLWLIIFVSGWTLSLG. N-linked (GlcNAc...) asparagine glycosylation occurs at asparagine 87. In terms of domain architecture, Peptidase S1 spans 121–401; the sequence is VYGTDSRFSI…ICLWIHGNAA (281 aa). A disulfide bond links cysteine 151 and cysteine 167. A compositionally biased stretch (basic residues) spans 186–204; that stretch reads LKMRNKGGRKKRRGSRRSR. Positions 186 to 248 are disordered; the sequence is LKMRNKGGRK…RPSFQWTRVK (63 aa).

It belongs to the peptidase S1 family.

It localises to the secreted. In Rattus norvegicus (Rat), this protein is Inactive serine protease 35 (Prss35).